The sequence spans 162 residues: Peroxiredoxin-2 (162 aa).

The Thioredoxin domain maps to 4-162 (IAVGDVLPDG…SSADDILKDL (159 aa)). C51 serves as the catalytic Cysteine sulfenic acid (-SOH) intermediate.

Belongs to the peroxiredoxin family. Prx5 subfamily. As to quaternary structure, monomer. Homodimer. Glutathionylation of C(P) causes the dimer to dissociate. Subsequent reduction of the mixed disulfide bond leads again to dimerization.

It carries out the reaction [glutaredoxin]-dithiol + a hydroperoxide = [glutaredoxin]-disulfide + an alcohol + H2O. In terms of biological role, thiol-specific peroxidase that catalyzes the reduction of hydrogen peroxide and organic hydroperoxides to water and alcohols, respectively. Can reduce H(2)O(2) and short chain organic, fatty acid, and phospholipid hydroperoxides. Plays a role in cell protection against oxidative stress by detoxifying peroxides. In Populus trichocarpa (Western balsam poplar), this protein is Peroxiredoxin-2.